Consider the following 374-residue polypeptide: GTPase Obg (374 aa).

Residues 1 to 159 (MKFIDEVRIH…RDLRLELRLL (159 aa)) form the Obg domain. In terms of domain architecture, OBG-type G spans 160–333 (ADVGLLGLPN…LVYAIWQALP (174 aa)). GTP contacts are provided by residues 166 to 173 (GLPNAGKS), 191 to 195 (FTTLY), 213 to 216 (DIPG), 283 to 286 (NKSD), and 314 to 316 (SAA). 2 residues coordinate Mg(2+): Ser-173 and Thr-193. The tract at residues 337 to 374 (PAADPTQTEDWGDESDAGERLENWEGDDLDADWEEEQV) is disordered. Positions 360 to 374 (WEGDDLDADWEEEQV) are enriched in acidic residues.

The protein belongs to the TRAFAC class OBG-HflX-like GTPase superfamily. OBG GTPase family. As to quaternary structure, monomer. Mg(2+) serves as cofactor.

Its subcellular location is the cytoplasm. An essential GTPase which binds GTP, GDP and possibly (p)ppGpp with moderate affinity, with high nucleotide exchange rates and a fairly low GTP hydrolysis rate. Plays a role in control of the cell cycle, stress response, ribosome biogenesis and in those bacteria that undergo differentiation, in morphogenesis control. The sequence is that of GTPase Obg from Acidithiobacillus ferrooxidans (strain ATCC 23270 / DSM 14882 / CIP 104768 / NCIMB 8455) (Ferrobacillus ferrooxidans (strain ATCC 23270)).